The primary structure comprises 273 residues: Hydroxyethylthiazole kinase (273 aa).

Met-47 contributes to the substrate binding site. Residues Arg-123 and Thr-172 each contribute to the ATP site. Gly-199 provides a ligand contact to substrate.

It belongs to the Thz kinase family. It depends on Mg(2+) as a cofactor.

The catalysed reaction is 5-(2-hydroxyethyl)-4-methylthiazole + ATP = 4-methyl-5-(2-phosphooxyethyl)-thiazole + ADP + H(+). It functions in the pathway cofactor biosynthesis; thiamine diphosphate biosynthesis; 4-methyl-5-(2-phosphoethyl)-thiazole from 5-(2-hydroxyethyl)-4-methylthiazole: step 1/1. Its function is as follows. Catalyzes the phosphorylation of the hydroxyl group of 4-methyl-5-beta-hydroxyethylthiazole (THZ). In Ruminiclostridium cellulolyticum (strain ATCC 35319 / DSM 5812 / JCM 6584 / H10) (Clostridium cellulolyticum), this protein is Hydroxyethylthiazole kinase.